The primary structure comprises 232 residues: MKTLSDISESVLIPTNSSLDKLLGGGIEKGCITQFYGPPGSGKTNIALKILYEATKNGSKAIYMDTEGGLSLERIQQIAGTDFGSISKNIYILEPKSFDEQILDIQNIEDILKKDKSIDMLIIDSIVALYRVEDGDPSEINKRLGRLMAKLLRLSREYNVAIVITNQIYSPFDSDDLIIEPIGGTVLKYWSKIIIEIEKSVDSLKRTATLQRHKTKAPGQSIKFEIIDRGII.

This sequence belongs to the eukaryotic RecA-like protein family. RadB subfamily.

Its function is as follows. Involved in DNA repair and in homologous recombination. May regulate the cleavage reactions of the branch-structured DNA. Has a very weak ATPase activity that is not stimulated by DNA. Binds DNA but does not promote DNA strands exchange. In Methanosphaera stadtmanae (strain ATCC 43021 / DSM 3091 / JCM 11832 / MCB-3), this protein is DNA repair and recombination protein RadB.